A 218-amino-acid chain; its full sequence is Recombination protein RecR (218 aa).

Residues 56-71 (CRICCNISREEVCRIC) form a C4-type zinc finger. A Toprim domain is found at 79 to 195 (STICVVEEPK…VVSRLASGMP (117 aa)).

The protein belongs to the RecR family.

In terms of biological role, may play a role in DNA repair. It seems to be involved in an RecBC-independent recombinational process of DNA repair. It may act with RecF and RecO. This is Recombination protein RecR from Corynebacterium diphtheriae (strain ATCC 700971 / NCTC 13129 / Biotype gravis).